The chain runs to 67 residues: Putative sodium channel alpha-toxin Acra5 (67 aa).

The LCN-type CS-alpha/beta domain maps to Arg-2–Arg-65. 4 disulfides stabilise this stretch: Cys-13-Cys-64, Cys-17-Cys-40, Cys-26-Cys-45, and Cys-30-Cys-47. Position 67 (Arg-67) is a propeptide, removed by a carboxypeptidase.

Belongs to the long (4 C-C) scorpion toxin superfamily. Sodium channel inhibitor family. Alpha subfamily. In terms of tissue distribution, expressed by the venom gland.

The protein resides in the secreted. Alpha toxins bind voltage-independently at site-3 of sodium channels (Nav) and inhibit the inactivation of the activated channels, thereby blocking neuronal transmission. This is Putative sodium channel alpha-toxin Acra5 from Androctonus crassicauda (Arabian fat-tailed scorpion).